Here is a 270-residue protein sequence, read N- to C-terminus: Putative pyruvate, phosphate dikinase regulatory protein (270 aa).

150–157 is an ADP binding site; the sequence is GPSRTSKS.

It belongs to the pyruvate, phosphate/water dikinase regulatory protein family. PDRP subfamily.

It carries out the reaction N(tele)-phospho-L-histidyl/L-threonyl-[pyruvate, phosphate dikinase] + ADP = N(tele)-phospho-L-histidyl/O-phospho-L-threonyl-[pyruvate, phosphate dikinase] + AMP + H(+). The enzyme catalyses N(tele)-phospho-L-histidyl/O-phospho-L-threonyl-[pyruvate, phosphate dikinase] + phosphate + H(+) = N(tele)-phospho-L-histidyl/L-threonyl-[pyruvate, phosphate dikinase] + diphosphate. Its function is as follows. Bifunctional serine/threonine kinase and phosphorylase involved in the regulation of the pyruvate, phosphate dikinase (PPDK) by catalyzing its phosphorylation/dephosphorylation. The chain is Putative pyruvate, phosphate dikinase regulatory protein from Neorickettsia sennetsu (strain ATCC VR-367 / Miyayama) (Ehrlichia sennetsu).